The primary structure comprises 208 residues: Uridine kinase (208 aa).

Position 11 to 18 (11 to 18) interacts with ATP; that stretch reads GGTGSGKS.

Belongs to the uridine kinase family.

The protein localises to the cytoplasm. The catalysed reaction is uridine + ATP = UMP + ADP + H(+). The enzyme catalyses cytidine + ATP = CMP + ADP + H(+). It participates in pyrimidine metabolism; CTP biosynthesis via salvage pathway; CTP from cytidine: step 1/3. It functions in the pathway pyrimidine metabolism; UMP biosynthesis via salvage pathway; UMP from uridine: step 1/1. The sequence is that of Uridine kinase from Alkaliphilus metalliredigens (strain QYMF).